The chain runs to 421 residues: Acyl-coenzyme A thioesterase 1 (421 aa).

Active-site charge relay system residues include serine 232, aspartate 326, and histidine 360.

This sequence belongs to the C/M/P thioester hydrolase family. In terms of assembly, monomer.

The protein resides in the cytoplasm. It is found in the cytosol. It carries out the reaction hexadecanoyl-CoA + H2O = hexadecanoate + CoA + H(+). The catalysed reaction is decanoyl-CoA + H2O = decanoate + CoA + H(+). The enzyme catalyses dodecanoyl-CoA + H2O = dodecanoate + CoA + H(+). It catalyses the reaction tetradecanoyl-CoA + H2O = tetradecanoate + CoA + H(+). It carries out the reaction octadecanoyl-CoA + H2O = octadecanoate + CoA + H(+). The catalysed reaction is eicosanoyl-CoA + H2O = eicosanoate + CoA + H(+). The enzyme catalyses (9Z)-octadecenoyl-CoA + H2O = (9Z)-octadecenoate + CoA + H(+). It catalyses the reaction (9Z)-hexadecenoyl-CoA + H2O = (9Z)-hexadecenoate + CoA + H(+). It carries out the reaction (9E)-octadecenoyl-CoA + H2O = (9E)-octadecenoate + CoA + H(+). It participates in lipid metabolism; fatty acid metabolism. Functionally, catalyzes the hydrolysis of acyl-CoAs into free fatty acids and coenzyme A (CoASH), regulating their respective intracellular levels. More active towards saturated and unsaturated long chain fatty acyl-CoAs (C12-C20). The protein is Acyl-coenzyme A thioesterase 1 (ACOT1) of Homo sapiens (Human).